Reading from the N-terminus, the 644-residue chain is Protein lin-9 (644 aa).

Residues 1–77 (MSSAVRSPRK…GRDSPSVNSL (77 aa)) are disordered. Over residues 50 to 62 (SIKRTGSPKKSPA) the composition is skewed to basic residues.

Belongs to the lin-9 family. Component of the DRM complex, at least composed of lin-9, lin-35, lin-37, lin-52, lin-53, lin-54- dpl-1 and efl-1. Interacts with zft-11; the interaction is required to suppress the activation of non-neuronal genes in neurons.

Its subcellular location is the nucleus. Synthetic multivulva class B (synMuvB) protein. SynMuvB proteins are required to repress the induction of vulval development by Ras signaling and probably act by forming the multiprotein DRM complex that represses transcription. Required for the development of sheath cells in the hermaphrodite gonad and for the development of the male spicule, rays and gonad. In association with the zinc finger protein ztf-11, negatively regulates the expression of non-neuronal genes during neurogenesis. In Caenorhabditis elegans, this protein is Protein lin-9.